The primary structure comprises 942 residues: Exopolysaccharide phosphotransferase SCO2592 (942 aa).

The protein belongs to the stealth family.

The chain is Exopolysaccharide phosphotransferase SCO2592 from Streptomyces coelicolor (strain ATCC BAA-471 / A3(2) / M145).